The sequence spans 194 residues: FMN-dependent NADH:quinone oxidoreductase 1 (194 aa).

FMN contacts are provided by residues Ser-9 and 85–88 (MYNF).

The protein belongs to the azoreductase type 1 family. Homodimer. The cofactor is FMN.

The enzyme catalyses 2 a quinone + NADH + H(+) = 2 a 1,4-benzosemiquinone + NAD(+). It carries out the reaction N,N-dimethyl-1,4-phenylenediamine + anthranilate + 2 NAD(+) = 2-(4-dimethylaminophenyl)diazenylbenzoate + 2 NADH + 2 H(+). Functionally, quinone reductase that provides resistance to thiol-specific stress caused by electrophilic quinones. Its function is as follows. Also exhibits azoreductase activity. Catalyzes the reductive cleavage of the azo bond in aromatic azo compounds to the corresponding amines. This chain is FMN-dependent NADH:quinone oxidoreductase 1, found in Xanthomonas euvesicatoria pv. vesicatoria (strain 85-10) (Xanthomonas campestris pv. vesicatoria).